The chain runs to 367 residues: B2 bradykinin receptor (367 aa).

The Extracellular segment spans residues Met-1 to Gln-36. 2 N-linked (GlcNAc...) asparagine glycosylation sites follow: Asn-3 and Asn-14. The helical transmembrane segment at Ala-37–Leu-60 threads the bilayer. At His-61–Glu-69 the chain is on the cytoplasmic side. A helical transmembrane segment spans residues Ile-70 to Ala-94. The Extracellular portion of the chain corresponds to Asn-95–Arg-107. A disulfide bridge connects residues Cys-106 and Cys-187. Residues Val-108–Ile-129 form a helical membrane-spanning segment. Topologically, residues Asp-130 to Lys-151 are cytoplasmic. Tyr-132 is modified (phosphotyrosine). The chain crosses the membrane as a helical span at residues Leu-152–Met-174. Residues His-175–Met-197 are Extracellular-facing. N-linked (GlcNAc...) asparagine glycosylation occurs at Asn-183. A helical membrane pass occupies residues Val-198–Leu-224. Over Gln-225 to Lys-243 the chain is Cytoplasmic. The helical transmembrane segment at Ala-244–Leu-268 threads the bilayer. At Asp-269 to Asp-287 the chain is on the extracellular side. The helical transmembrane segment at Val-288–Val-311 threads the bilayer. Residues Gly-312–Gln-367 are Cytoplasmic-facing. Tyr-323 bears the Phosphotyrosine mark. Residue Cys-327 is the site of S-palmitoyl cysteine attachment. Ser-342 is modified (phosphoserine). At Thr-345 the chain carries Phosphothreonine. 2 positions are modified to phosphoserine; by GRK6: Ser-349 and Ser-351.

It belongs to the G-protein coupled receptor 1 family. Bradykinin receptor subfamily. BDKRB2 sub-subfamily. In terms of assembly, forms a complex with PECAM1 and GNAQ. Interacts with PECAM1.

The protein localises to the cell membrane. In terms of biological role, receptor for bradykinin. It is associated with G proteins that activate a phosphatidylinositol-calcium second messenger system. The polypeptide is B2 bradykinin receptor (BDKRB2) (Sus scrofa (Pig)).